The following is a 426-amino-acid chain: Adenylosuccinate synthetase (426 aa).

GTP is bound by residues 12 to 18 and 40 to 42; these read GDEGKGK and GHT. The active-site Proton acceptor is D13. Mg(2+) is bound by residues D13 and G40. Residues 13–16, 38–41, T128, R142, Q223, T238, and R302 each bind IMP; these read DEGK and NAGH. The active-site Proton donor is H41. A substrate-binding site is contributed by 298–304; the sequence is TTTGRAR. GTP contacts are provided by residues R304, 330 to 332, and 412 to 414; these read KLD and SVG.

It belongs to the adenylosuccinate synthetase family. In terms of assembly, homodimer. It depends on Mg(2+) as a cofactor.

Its subcellular location is the cytoplasm. It catalyses the reaction IMP + L-aspartate + GTP = N(6)-(1,2-dicarboxyethyl)-AMP + GDP + phosphate + 2 H(+). It functions in the pathway purine metabolism; AMP biosynthesis via de novo pathway; AMP from IMP: step 1/2. In terms of biological role, plays an important role in the de novo pathway of purine nucleotide biosynthesis. Catalyzes the first committed step in the biosynthesis of AMP from IMP. The chain is Adenylosuccinate synthetase from Thermoanaerobacter pseudethanolicus (strain ATCC 33223 / 39E) (Clostridium thermohydrosulfuricum).